Reading from the N-terminus, the 549-residue chain is MAADVHKKKGWEVPNGSLAPGDGQHAERSESPTPGLAQGTEPGAGQEGAMFVHTRSYEDLTSPEDGGAVVRSPEERRGEPAEPTSMEQISKDFSELSTQLTGMALDLEEEMRQSQEGKLEPSPQATRHDSVLSGKEEEDVTMDTWRMHRKHVFVLSEAGKPVYSRYGSEEALSSTMGVMMALVSFLEAEKNAIRSIHADGYKVVFVRRSPLVLVAVARTRQSEQEIAHELLYIYYQILSLLTWTQLNHIFQQKQNYDLRRLLAGSERITDNLLDLMAHDPSFLMGAVRCLPLAASVRDAVSTSLQQAKAKSLVFSILLSGNQLVSLVRKKDQFLHPIDLHLLFNLISSSSSFREGEAWTPICLPKFNSSGFFHAHISYLEQEMDLCLLLVSTDREDFFTVSDCKRRFQERLRRRGVHHALQEALRTPFYSVAQVGIPDLRHFIYKSKSSGLFTSPEIEAPYVREEEKERLLGLYQYLHSRAHNSSCPLKNIYFTGPRENLLAWVTSAFELYICYSPLGTKAGAISAVNKLMKWIRKEEDRLFILTPQTY.

Disordered stretches follow at residues 1–90 and 109–137; these read MAAD…EQIS and EEMR…GKEE. Positions 110–119 are enriched in basic and acidic residues; sequence EMRQSQEGKL.

It belongs to the MON1/SAND family.

Functionally, plays an important role in membrane trafficking through the secretory apparatus. Not involved in endocytic trafficking to lysosomes. This chain is Vacuolar fusion protein MON1 homolog A (MON1A), found in Gallus gallus (Chicken).